The following is a 68-amino-acid chain: Large ribosomal subunit protein bL31 (68 aa).

Zn(2+) is bound by residues cysteine 16, cysteine 18, cysteine 37, and cysteine 40.

This sequence belongs to the bacterial ribosomal protein bL31 family. Type A subfamily. In terms of assembly, part of the 50S ribosomal subunit. The cofactor is Zn(2+).

Functionally, binds the 23S rRNA. The protein is Large ribosomal subunit protein bL31 of Aquifex aeolicus (strain VF5).